The primary structure comprises 211 residues: Protein crossbronx-like (211 aa).

Positions 17 to 177 (NQGYQILAEY…VRNSILWSCK (161 aa)) constitute a UBC core domain.

The protein belongs to the ubiquitin-conjugating enzyme family. FTS subfamily.

This chain is Protein crossbronx-like, found in Drosophila grimshawi (Hawaiian fruit fly).